A 377-amino-acid polypeptide reads, in one-letter code: Actin-related protein T2 (377 aa).

Belongs to the actin family.

It is found in the cytoplasm. The protein localises to the cytoskeleton. The sequence is that of Actin-related protein T2 (ACTRT2) from Homo sapiens (Human).